A 180-amino-acid chain; its full sequence is Endoribonuclease YbeY (180 aa).

Zn(2+) contacts are provided by His118, His122, and His128.

Belongs to the endoribonuclease YbeY family. Zn(2+) is required as a cofactor.

It localises to the cytoplasm. In terms of biological role, single strand-specific metallo-endoribonuclease involved in late-stage 70S ribosome quality control and in maturation of the 3' terminus of the 16S rRNA. The protein is Endoribonuclease YbeY of Rhodococcus jostii (strain RHA1).